We begin with the raw amino-acid sequence, 325 residues long: Elongation factor P--(R)-beta-lysine ligase (325 aa).

76 to 78 (SPE) serves as a coordination point for substrate. ATP contacts are provided by residues 100–102 (RNE) and Asn109. Tyr118 provides a ligand contact to substrate. 244–245 (EL) is an ATP binding site. Glu251 lines the substrate pocket. Gly300 contacts ATP.

Belongs to the class-II aminoacyl-tRNA synthetase family. EpmA subfamily. Homodimer.

It carries out the reaction D-beta-lysine + L-lysyl-[protein] + ATP = N(6)-((3R)-3,6-diaminohexanoyl)-L-lysyl-[protein] + AMP + diphosphate + H(+). With EpmB is involved in the beta-lysylation step of the post-translational modification of translation elongation factor P (EF-P) on 'Lys-34'. Catalyzes the ATP-dependent activation of (R)-beta-lysine produced by EpmB, forming a lysyl-adenylate, from which the beta-lysyl moiety is then transferred to the epsilon-amino group of EF-P 'Lys-34'. The polypeptide is Elongation factor P--(R)-beta-lysine ligase (Salmonella choleraesuis (strain SC-B67)).